We begin with the raw amino-acid sequence, 201 residues long: ATP-dependent Clp protease proteolytic subunit (201 aa).

The active-site Nucleophile is S105. H130 is an active-site residue.

Belongs to the peptidase S14 family. Fourteen ClpP subunits assemble into 2 heptameric rings which stack back to back to give a disk-like structure with a central cavity, resembling the structure of eukaryotic proteasomes.

It localises to the cytoplasm. It carries out the reaction Hydrolysis of proteins to small peptides in the presence of ATP and magnesium. alpha-casein is the usual test substrate. In the absence of ATP, only oligopeptides shorter than five residues are hydrolyzed (such as succinyl-Leu-Tyr-|-NHMec, and Leu-Tyr-Leu-|-Tyr-Trp, in which cleavage of the -Tyr-|-Leu- and -Tyr-|-Trp bonds also occurs).. Cleaves peptides in various proteins in a process that requires ATP hydrolysis. Has a chymotrypsin-like activity. Plays a major role in the degradation of misfolded proteins. In Acinetobacter baylyi (strain ATCC 33305 / BD413 / ADP1), this protein is ATP-dependent Clp protease proteolytic subunit.